Consider the following 392-residue polypeptide: Succinyl-diaminopimelate desuccinylase (392 aa).

A Zn(2+)-binding site is contributed by His-71. Asp-73 is an active-site residue. Zn(2+) is bound at residue Asp-102. Catalysis depends on Glu-144, which acts as the Proton acceptor. Glu-145, Glu-173, and His-362 together coordinate Zn(2+).

It belongs to the peptidase M20A family. DapE subfamily. As to quaternary structure, homodimer. Zn(2+) is required as a cofactor. Requires Co(2+) as cofactor.

The catalysed reaction is N-succinyl-(2S,6S)-2,6-diaminopimelate + H2O = (2S,6S)-2,6-diaminopimelate + succinate. The protein operates within amino-acid biosynthesis; L-lysine biosynthesis via DAP pathway; LL-2,6-diaminopimelate from (S)-tetrahydrodipicolinate (succinylase route): step 3/3. Its function is as follows. Catalyzes the hydrolysis of N-succinyl-L,L-diaminopimelic acid (SDAP), forming succinate and LL-2,6-diaminopimelate (DAP), an intermediate involved in the bacterial biosynthesis of lysine and meso-diaminopimelic acid, an essential component of bacterial cell walls. The protein is Succinyl-diaminopimelate desuccinylase of Rhodospirillum rubrum (strain ATCC 11170 / ATH 1.1.1 / DSM 467 / LMG 4362 / NCIMB 8255 / S1).